Here is a 333-residue protein sequence, read N- to C-terminus: Uroporphyrinogen decarboxylase (333 aa).

Substrate is bound by residues 21 to 25 (RQVGR), Asp-70, Tyr-139, Ser-194, and His-309.

It belongs to the uroporphyrinogen decarboxylase family. Homodimer.

Its subcellular location is the cytoplasm. The enzyme catalyses uroporphyrinogen III + 4 H(+) = coproporphyrinogen III + 4 CO2. It functions in the pathway porphyrin-containing compound metabolism; protoporphyrin-IX biosynthesis; coproporphyrinogen-III from 5-aminolevulinate: step 4/4. Catalyzes the decarboxylation of four acetate groups of uroporphyrinogen-III to yield coproporphyrinogen-III. This chain is Uroporphyrinogen decarboxylase, found in Chlamydia caviae (strain ATCC VR-813 / DSM 19441 / 03DC25 / GPIC) (Chlamydophila caviae).